A 479-amino-acid chain; its full sequence is D-aminoacyl-tRNA deacylase (479 aa).

It belongs to the DtdA deacylase family. Monomer. It depends on Zn(2+) as a cofactor.

It catalyses the reaction a D-aminoacyl-tRNA + H2O = a tRNA + a D-alpha-amino acid + H(+). It carries out the reaction glycyl-tRNA(Ala) + H2O = tRNA(Ala) + glycine + H(+). D-aminoacyl-tRNA deacylase with broad substrate specificity. By recycling D-aminoacyl-tRNA to D-amino acids and free tRNA molecules, this enzyme counteracts the toxicity associated with the formation of D-aminoacyl-tRNA entities in vivo. The chain is D-aminoacyl-tRNA deacylase from Methanococcoides burtonii (strain DSM 6242 / NBRC 107633 / OCM 468 / ACE-M).